Here is a 301-residue protein sequence, read N- to C-terminus: Acetyl-coenzyme A carboxylase carboxyl transferase subunit beta (301 aa).

Positions 25–294 (LWIKDPSTGE…NSDAPAPQKP (270 aa)) constitute a CoA carboxyltransferase N-terminal domain.

The protein belongs to the AccD/PCCB family. Acetyl-CoA carboxylase is a heterohexamer composed of biotin carboxyl carrier protein (AccB), biotin carboxylase (AccC) and two subunits each of ACCase subunit alpha (AccA) and ACCase subunit beta (AccD).

The protein resides in the cytoplasm. It carries out the reaction N(6)-carboxybiotinyl-L-lysyl-[protein] + acetyl-CoA = N(6)-biotinyl-L-lysyl-[protein] + malonyl-CoA. Its pathway is lipid metabolism; malonyl-CoA biosynthesis; malonyl-CoA from acetyl-CoA: step 1/1. In terms of biological role, component of the acetyl coenzyme A carboxylase (ACC) complex. Biotin carboxylase (BC) catalyzes the carboxylation of biotin on its carrier protein (BCCP) and then the CO(2) group is transferred by the transcarboxylase to acetyl-CoA to form malonyl-CoA. The protein is Acetyl-coenzyme A carboxylase carboxyl transferase subunit beta of Brucella canis (strain ATCC 23365 / NCTC 10854 / RM-666).